Here is a 192-residue protein sequence, read N- to C-terminus: Transcription antitermination protein NusB (192 aa).

The protein belongs to the NusB family.

Involved in transcription antitermination. Required for transcription of ribosomal RNA (rRNA) genes. Binds specifically to the boxA antiterminator sequence of the ribosomal RNA (rrn) operons. The protein is Transcription antitermination protein NusB of Lactococcus lactis subsp. lactis (strain IL1403) (Streptococcus lactis).